A 54-amino-acid polypeptide reads, in one-letter code: Small ribosomal subunit protein uS14 (54 aa).

Residues cysteine 19, cysteine 22, cysteine 37, and cysteine 40 each coordinate Zn(2+).

This sequence belongs to the universal ribosomal protein uS14 family. Zinc-binding uS14 subfamily. In terms of assembly, part of the 30S ribosomal subunit. It depends on Zn(2+) as a cofactor.

Its function is as follows. Binds 16S rRNA, required for the assembly of 30S particles. This chain is Small ribosomal subunit protein uS14, found in Sulfolobus acidocaldarius (strain ATCC 33909 / DSM 639 / JCM 8929 / NBRC 15157 / NCIMB 11770).